A 1755-amino-acid polypeptide reads, in one-letter code: Transposon Ty1-GR3 Gag-Pol polyprotein (1755 aa).

3 stretches are compositionally biased toward polar residues: residues 1–10 (MESQQLSNYP), 48–60 (TKAN…TPAS), and 127–152 (QSQF…GNTF). Disordered regions lie at residues 1 to 93 (MESQ…MMTQ), 126 to 173 (PQSQ…RPPP), and 352 to 421 (GSRN…SKST). Residues 153–165 (TDSSSADSDMTST) are compositionally biased toward low complexity. The RNA-binding stretch occupies residues 299-401 (NNGIHINNKV…NSKSKTARAH (103 aa)). The span at 402-418 (NVSTSNNSPSTDNDSIS) shows a compositional bias: low complexity. A Phosphoserine modification is found at Ser416. Asp461 (for protease activity; shared with dimeric partner) is an active-site residue. Residues 583-640 (NVHTSESTRKYPYPFIHRMLAHANAQTIRYSLKNNTITYFNESDVDWSSAIDYQCPDC) are integrase-type zinc finger-like. Positions 660 to 835 (NSYEPFQYLH…AGLDISTLLP (176 aa)) constitute an Integrase catalytic domain. Residues Asp671 and Asp736 each coordinate Mg(2+). The disordered stretch occupies residues 956–1172 (SKAVSPTDST…LGGIGDSNAY (217 aa)). The segment covering 960–969 (SPTDSTPPST) has biased composition (low complexity). Polar residues-rich tracts occupy residues 1005–1015 (STPQISNIEST) and 1031–1043 (MSQS…SYAS). Positions 1044-1053 (KSKDFRHSDS) are enriched in basic and acidic residues. 2 stretches are compositionally biased toward polar residues: residues 1054–1082 (YSDN…QTSE) and 1095–1106 (SIDTSSSESNSL). A Bipartite nuclear localization signal motif is present at residues 1178-1212 (KKRSLEDNETEIKVSRDTWNTKNMRSLEPPRSKKR). The Reverse transcriptase Ty1/copia-type domain maps to 1338-1476 (NNYYITQLDI…DILGLEIKYQ (139 aa)). The Mg(2+) site is built by Asp1346, Asp1427, Asp1428, Asp1610, Glu1652, and Asp1685. Residues 1610–1752 (DASYGNQPYY…IKTFKLLTNK (143 aa)) enclose the RNase H Ty1/copia-type domain.

As to quaternary structure, the capsid protein forms a homotrimer, from which the VLPs are assembled. The protease is a homodimer, whose active site consists of two apposed aspartic acid residues. In terms of processing, initially, virus-like particles (VLPs) are composed of the structural unprocessed proteins Gag and Gag-Pol, and also contain the host initiator methionine tRNA (tRNA(i)-Met) which serves as a primer for minus-strand DNA synthesis, and a dimer of genomic Ty RNA. Processing of the polyproteins occurs within the particle and proceeds by an ordered pathway, called maturation. First, the protease (PR) is released by autocatalytic cleavage of the Gag-Pol polyprotein yielding capsid protein p45 and a Pol-p154 precursor protein. This cleavage is a prerequisite for subsequent processing of Pol-p154 at the remaining sites to release the mature structural and catalytic proteins. Maturation takes place prior to the RT reaction and is required to produce transposition-competent VLPs.

It localises to the cytoplasm. The protein localises to the nucleus. It catalyses the reaction DNA(n) + a 2'-deoxyribonucleoside 5'-triphosphate = DNA(n+1) + diphosphate. It carries out the reaction Endonucleolytic cleavage to 5'-phosphomonoester.. In terms of biological role, capsid protein (CA) is the structural component of the virus-like particle (VLP), forming the shell that encapsulates the retrotransposons dimeric RNA genome. The particles are assembled from trimer-clustered units and there are holes in the capsid shells that allow for the diffusion of macromolecules. CA also has nucleocapsid-like chaperone activity, promoting primer tRNA(i)-Met annealing to the multipartite primer-binding site (PBS), dimerization of Ty1 RNA and initiation of reverse transcription. Its function is as follows. The aspartyl protease (PR) mediates the proteolytic cleavages of the Gag and Gag-Pol polyproteins after assembly of the VLP. Reverse transcriptase/ribonuclease H (RT) is a multifunctional enzyme that catalyzes the conversion of the retro-elements RNA genome into dsDNA within the VLP. The enzyme displays a DNA polymerase activity that can copy either DNA or RNA templates, and a ribonuclease H (RNase H) activity that cleaves the RNA strand of RNA-DNA heteroduplexes during plus-strand synthesis and hydrolyzes RNA primers. The conversion leads to a linear dsDNA copy of the retrotransposon that includes long terminal repeats (LTRs) at both ends. Functionally, integrase (IN) targets the VLP to the nucleus, where a subparticle preintegration complex (PIC) containing at least integrase and the newly synthesized dsDNA copy of the retrotransposon must transit the nuclear membrane. Once in the nucleus, integrase performs the integration of the dsDNA into the host genome. This chain is Transposon Ty1-GR3 Gag-Pol polyprotein (TY1B-GR3), found in Saccharomyces cerevisiae (strain ATCC 204508 / S288c) (Baker's yeast).